Here is a 128-residue protein sequence, read N- to C-terminus: Holo-[acyl-carrier-protein] synthase (128 aa).

Residues Asp-8 and Glu-60 each coordinate Mg(2+).

It belongs to the P-Pant transferase superfamily. AcpS family. Requires Mg(2+) as cofactor.

Its subcellular location is the cytoplasm. The enzyme catalyses apo-[ACP] + CoA = holo-[ACP] + adenosine 3',5'-bisphosphate + H(+). In terms of biological role, transfers the 4'-phosphopantetheine moiety from coenzyme A to a Ser of acyl-carrier-protein. This is Holo-[acyl-carrier-protein] synthase from Anaeromyxobacter sp. (strain K).